A 655-amino-acid polypeptide reads, in one-letter code: MLSKIIIIIFIVINFINIIISSITFDIDCRDIINGGINPSSSSSNSNSGSDYSGEIILNLKNKECKDYHIEELLNNYYIQNNNNNNNNIITINGNETFGTTIIQSKKQPFLNLINDNSNNSTTTKSISLNITINNINFNNWITPILYMETINNNIDFINTNFNNHSNEILISYPIISNNDSNDNNSINKTLNSINLNNCKFENFNYLTKLNNLIMPIKLKQTSISVKTSTFINLSMNNTFFHLNQSSLTISNCSTNNITTNNFSFITLINSPTIISNYNHSNSNGSFINHINNNNDLIDFSNENMLIEFSNFNNNLILPQPQPQLELLEQRLQQLNNSDYNNNNNNNNNNNNNNNNNNNNNNNSFNENINGFIILDCENKTEKANVLFYSNQFINIMPYNINFNYSIINIKNINLILNNNNIINNINSNSNNNNSGIISKANFNNQNLIHIVNSNLTLIDSKIESDNPIGGEYSTVYIDSPSNDKIGWNKSNNTNSSDDDDSNSNSSSSGGGSGDNNSIGSSDNSKNKNNKLEWCFDCDGCVFSISTDKNVTLTNSDICPDPDAPNNSNDNGNGNGGGSGKKSYKNTILAVTISAIGIICVALLLTVVILKRRNRKSSFDYLLINQYYLDDEEEKRELLLNRNNNYYYDNNIIDN.

A helical transmembrane segment spans residues 5-25; it reads IIIIIFIVINFINIIISSITF. Disordered stretches follow at residues 337–363 and 484–525; these read NSDY…NNNN and DKIG…SDNS. A compositionally biased stretch (low complexity) spans 515–524; sequence DNNSIGSSDN. The helical transmembrane segment at 588–608 threads the bilayer; sequence ILAVTISAIGIICVALLLTVV.

The protein resides in the membrane. This is an uncharacterized protein from Dictyostelium discoideum (Social amoeba).